Reading from the N-terminus, the 177-residue chain is Arginine metabolism regulation protein I (177 aa).

Positions 1–12 (MTSNSDGSSTSP) are enriched in polar residues. 2 disordered regions span residues 1–82 (MTSN…TRRK) and 157–177 (NASD…SPAN). Residues 40 to 53 (QDQEGDFDEEDDDD) show a composition bias toward acidic residues. Residues 56-67 (SVSTSTPTPTIT) show a composition bias toward low complexity. One can recognise an MADS-box domain in the interval 80–134 (RRKQPIRYIENKTRRHVTFSKRRHGIMKKAYELSVLTGANILLLILANSGLVYTF). Positions 158–177 (ASDTPDATDTSPAQEQSPAN) are enriched in polar residues.

Interacts with ARG81 and ARG82.

The protein resides in the nucleus. Functionally, with ARG81, ARG82 and MCM1, coordinates the expression of arginine anabolic and catabolic genes in response to arginine. The chain is Arginine metabolism regulation protein I (ARG80) from Saccharomyces cerevisiae (strain ATCC 204508 / S288c) (Baker's yeast).